A 316-amino-acid polypeptide reads, in one-letter code: L-lactate dehydrogenase 1 (316 aa).

Residues Val-17, Asp-38, Lys-43, and Tyr-69 each contribute to the NAD(+) site. Substrate contacts are provided by residues Arg-92 and 124 to 127 (NPVD). Residues 122 to 124 (VSN) and Thr-147 contribute to the NAD(+) site. 152–155 (DTSR) contributes to the substrate binding site. His-179 acts as the Proton acceptor in catalysis. Residue Thr-234 coordinates substrate.

This sequence belongs to the LDH/MDH superfamily. LDH family. As to quaternary structure, homotetramer.

The protein localises to the cytoplasm. It carries out the reaction (S)-lactate + NAD(+) = pyruvate + NADH + H(+). It functions in the pathway fermentation; pyruvate fermentation to lactate; (S)-lactate from pyruvate: step 1/1. Its function is as follows. Catalyzes the conversion of lactate to pyruvate. This Bifidobacterium longum subsp. longum (strain ATCC 15707 / DSM 20219 / JCM 1217 / NCTC 11818 / E194b) protein is L-lactate dehydrogenase 1.